The sequence spans 117 residues: MSKILEMLEQEQMKTDLPAFAPGDTVVVQVKVTEADKSRLQAFEGVVIAVKSRGLHSAFTVRKISNGVGVERVFQTHSPIVDSIEVKRRGDVRQAKLYYLRELSGRKARIKEKLAKK.

It belongs to the bacterial ribosomal protein bL19 family.

Functionally, this protein is located at the 30S-50S ribosomal subunit interface and may play a role in the structure and function of the aminoacyl-tRNA binding site. The protein is Large ribosomal subunit protein bL19 of Colwellia psychrerythraea (strain 34H / ATCC BAA-681) (Vibrio psychroerythus).